The primary structure comprises 496 residues: Cytochrome P450 3A56 (496 aa).

Cys441 lines the heme pocket.

The protein belongs to the cytochrome P450 family. Heme serves as cofactor. In terms of tissue distribution, highly expressed in liver and intestine. Moderate expression in gill and spleen. Low expression in kidney, brain and heart.

The protein localises to the endoplasmic reticulum membrane. Its subcellular location is the microsome membrane. The catalysed reaction is an organic molecule + reduced [NADPH--hemoprotein reductase] + O2 = an alcohol + oxidized [NADPH--hemoprotein reductase] + H2O + H(+). Functionally, putative steroid 6-beta-hydroxylase. This chain is Cytochrome P450 3A56 (cyp3a56), found in Fundulus heteroclitus (Killifish).